The primary structure comprises 263 residues: Small ribosomal subunit protein bS1c (263 aa).

S1 motif domains follow at residues 27–96, 114–178, and 192–260; these read GDIV…LSIR, DSLL…LSHR, and GNII…LSMK.

The protein belongs to the bacterial ribosomal protein bS1 family.

The protein resides in the plastid. It localises to the chloroplast. The polypeptide is Small ribosomal subunit protein bS1c (rps1) (Porphyra purpurea (Red seaweed)).